Consider the following 715-residue polypeptide: Polyribonucleotide nucleotidyltransferase (715 aa).

Positions 485 and 491 each coordinate Mg(2+). The KH domain occupies 552-611 (PRIHTMKIDPKKIKDVIGKGGAVIRALTEETGTSIDIDDDGTVKIAATDNNAAKAVMARI). The region spanning 621–689 (NAIYKGKVTR…RQNRIRLTMK (69 aa)) is the S1 motif domain. Residues 695–715 (TPVAENVTEEAEVSSEQQAEI) are disordered.

The protein belongs to the polyribonucleotide nucleotidyltransferase family. As to quaternary structure, component of the RNA degradosome, which is a multiprotein complex involved in RNA processing and mRNA degradation. Mg(2+) serves as cofactor.

Its subcellular location is the cytoplasm. It catalyses the reaction RNA(n+1) + phosphate = RNA(n) + a ribonucleoside 5'-diphosphate. In terms of biological role, involved in mRNA degradation. Catalyzes the phosphorolysis of single-stranded polyribonucleotides processively in the 3'- to 5'-direction. This Actinobacillus pleuropneumoniae serotype 3 (strain JL03) protein is Polyribonucleotide nucleotidyltransferase.